The following is a 496-amino-acid chain: GPI mannosyltransferase 4 (496 aa).

3 consecutive transmembrane segments (helical) span residues 5–25, 56–73, and 85–105; these read LIWLLPAIGLVVALQPSYIHP, ARSYFPLYAFYGPLFYLM, and ILRIIRFYNFMLYLSVLYYAL. A glycan (N-linked (GlcNAc...) asparagine) is linked at N156. Helical transmembrane passes span 174 to 194, 207 to 227, 261 to 281, 286 to 306, 311 to 328, and 337 to 357; these read GFLISVGTFTRISFPAFLLLP, WIQMVVIAVSMTLSTSIIVYF, PRYTHLLVNIPLILGPGLLMI, NDFLNLPLLSIISSLFFLSAL, LRFLLPVVPLFSTLLTRF, and IWLVFNAAMCIIMGIFHQGGV. N-linked (GlcNAc...) asparagine glycosylation is present at N459.

Belongs to the glycosyltransferase 22 family. PIGZ subfamily.

Its subcellular location is the endoplasmic reticulum membrane. Its pathway is glycolipid biosynthesis; glycosylphosphatidylinositol-anchor biosynthesis. Its function is as follows. Alpha-1,2-mannosyltransferase involved in glycosylphosphatidylinositol-anchor biosynthesis. Transfers a fourth mannose to trimannosyl-GPIs during GPI precursor assembly. The presence of a fourth mannose in GPI is essential in fungi. This is GPI mannosyltransferase 4 (SMP3) from Candida glabrata (strain ATCC 2001 / BCRC 20586 / JCM 3761 / NBRC 0622 / NRRL Y-65 / CBS 138) (Yeast).